The chain runs to 732 residues: Lanosterol synthase (732 aa).

Threonine 2 is modified (N-acetylthreonine). 7 PFTB repeats span residues 77-121, 124-165, 424-468, 483-528, 560-600, 612-653, and 670-712; these read ALNG…PLPA, REEI…RILG, PDNP…LLLQ, LCDA…MIDY, LTQG…ACMG, VSRA…HNTC, and QERG…NIFP. The active-site Proton donor is the aspartate 455.

The protein belongs to the terpene cyclase/mutase family. As to quaternary structure, monomer. As to expression, widely expressed. Expressed in the hair bulb, the outer root sheath and hair matrix of the hair follicle epithelium. Also detected in dermal papilla, epidermis, sweat glands, sebaceous glands, and blood vessels.

Its subcellular location is the endoplasmic reticulum membrane. The enzyme catalyses (S)-2,3-epoxysqualene = lanosterol. It participates in terpene metabolism; lanosterol biosynthesis; lanosterol from farnesyl diphosphate: step 3/3. In terms of biological role, key enzyme in the cholesterol biosynthesis pathway. Catalyzes the cyclization of (S)-2,3 oxidosqualene to lanosterol, a reaction that forms the sterol nucleus. Through the production of lanosterol may regulate lens protein aggregation and increase transparency. This is Lanosterol synthase (LSS) from Homo sapiens (Human).